The chain runs to 79 residues: Alpha-actitoxin-Ms11a-4 (79 aa).

The first 23 residues, 1–23, serve as a signal peptide directing secretion; sequence MKVLVAVLVFALLMCMFVDIAES. The propeptide occupies 24–46; sequence RRRDNPEYPSGLRYDEEMGVFKR. Intrachain disulfides connect C47–C61, C54–C67, and C60–C76. Y78 is subject to Tyrosine amide.

It localises to the secreted. The protein resides in the nematocyst. Its function is as follows. Alpha-toxins act on postsynaptic membranes, they bind to the nicotinic acetylcholine receptors (nAChR) and thus inhibit them. This toxin very weakly competes with alpha-bungarotoxin for binding to orthosteric sites on muscle-type T.carlifornicus (IC(50)=14.95 uM) and human alpha-7/CHRNA7 nAChRs (IC(50)&gt;45 uM). This chain is Alpha-actitoxin-Ms11a-4, found in Metridium senile (Brown sea anemone).